Consider the following 184-residue polypeptide: Large ribosomal subunit protein uL6 (184 aa).

This sequence belongs to the universal ribosomal protein uL6 family. As to quaternary structure, part of the 50S ribosomal subunit.

Functionally, this protein binds to the 23S rRNA, and is important in its secondary structure. It is located near the subunit interface in the base of the L7/L12 stalk, and near the tRNA binding site of the peptidyltransferase center. The polypeptide is Large ribosomal subunit protein uL6 (Desulfitobacterium hafniense (strain Y51)).